The primary structure comprises 203 residues: Histidine biosynthesis bifunctional protein HisIE (203 aa).

The interval 1 to 108 is phosphoribosyl-AMP cyclohydrolase; sequence MELDFDKMNG…GEKNEEPVMF (108 aa). Residues 109–203 form a phosphoribosyl-ATP pyrophosphohydrolase region; sequence LKALQDFIDK…ERHSSTWKKH (95 aa).

The protein in the N-terminal section; belongs to the PRA-CH family. In the C-terminal section; belongs to the PRA-PH family.

Its subcellular location is the cytoplasm. It carries out the reaction 1-(5-phospho-beta-D-ribosyl)-ATP + H2O = 1-(5-phospho-beta-D-ribosyl)-5'-AMP + diphosphate + H(+). It catalyses the reaction 1-(5-phospho-beta-D-ribosyl)-5'-AMP + H2O = 1-(5-phospho-beta-D-ribosyl)-5-[(5-phospho-beta-D-ribosylamino)methylideneamino]imidazole-4-carboxamide. It functions in the pathway amino-acid biosynthesis; L-histidine biosynthesis; L-histidine from 5-phospho-alpha-D-ribose 1-diphosphate: step 2/9. The protein operates within amino-acid biosynthesis; L-histidine biosynthesis; L-histidine from 5-phospho-alpha-D-ribose 1-diphosphate: step 3/9. The protein is Histidine biosynthesis bifunctional protein HisIE of Bacteroides thetaiotaomicron (strain ATCC 29148 / DSM 2079 / JCM 5827 / CCUG 10774 / NCTC 10582 / VPI-5482 / E50).